We begin with the raw amino-acid sequence, 492 residues long: Probable malate:quinone oxidoreductase 1 (492 aa).

It belongs to the MQO family. FAD is required as a cofactor.

The catalysed reaction is (S)-malate + a quinone = a quinol + oxaloacetate. Its pathway is carbohydrate metabolism; tricarboxylic acid cycle; oxaloacetate from (S)-malate (quinone route): step 1/1. In Staphylococcus epidermidis (strain ATCC 12228 / FDA PCI 1200), this protein is Probable malate:quinone oxidoreductase 1.